Reading from the N-terminus, the 508-residue chain is ATP synthase subunit alpha, chloroplastic (508 aa).

170-177 lines the ATP pocket; sequence GDRQTGKT.

Belongs to the ATPase alpha/beta chains family. In terms of assembly, F-type ATPases have 2 components, CF(1) - the catalytic core - and CF(0) - the membrane proton channel. CF(1) has five subunits: alpha(3), beta(3), gamma(1), delta(1), epsilon(1). CF(0) has four main subunits: a, b, b' and c.

It localises to the plastid. Its subcellular location is the chloroplast thylakoid membrane. The enzyme catalyses ATP + H2O + 4 H(+)(in) = ADP + phosphate + 5 H(+)(out). Functionally, produces ATP from ADP in the presence of a proton gradient across the membrane. The alpha chain is a regulatory subunit. In Lactuca sativa (Garden lettuce), this protein is ATP synthase subunit alpha, chloroplastic.